We begin with the raw amino-acid sequence, 130 residues long: Small ribosomal subunit protein uS9 (130 aa).

The protein belongs to the universal ribosomal protein uS9 family.

This Pseudomonas aeruginosa (strain LESB58) protein is Small ribosomal subunit protein uS9.